Consider the following 498-residue polypeptide: ATP synthase subunit beta, chloroplastic (498 aa).

Residue 172-179 participates in ATP binding; the sequence is GGAGVGKT.

It belongs to the ATPase alpha/beta chains family. F-type ATPases have 2 components, CF(1) - the catalytic core - and CF(0) - the membrane proton channel. CF(1) has five subunits: alpha(3), beta(3), gamma(1), delta(1), epsilon(1). CF(0) has four main subunits: a(1), b(1), b'(1) and c(9-12).

The protein resides in the plastid. It is found in the chloroplast thylakoid membrane. The catalysed reaction is ATP + H2O + 4 H(+)(in) = ADP + phosphate + 5 H(+)(out). Its function is as follows. Produces ATP from ADP in the presence of a proton gradient across the membrane. The catalytic sites are hosted primarily by the beta subunits. This Daucus carota (Wild carrot) protein is ATP synthase subunit beta, chloroplastic.